The sequence spans 188 residues: CASP-like protein 4B1 (188 aa).

The segment covering 1–11 has biased composition (basic and acidic residues); it reads MTNPDKQKPVE. Positions 1 to 34 are disordered; that stretch reads MTNPDKQKPVEVTDVETAAEKTSEPTPASGTSTI. Residues 1–46 lie on the Cytoplasmic side of the membrane; it reads MTNPDKQKPVEVTDVETAAEKTSEPTPASGTSTITQRWKREDLIKK. A compositionally biased stretch (polar residues) spans 24-34; the sequence is EPTPASGTSTI. Residues 47 to 67 form a helical membrane-spanning segment; the sequence is ASPITRGICLLFSLLAFLIMV. The Extracellular segment spans residues 68–84; sequence SNKHGYGRNFNEYEEYR. The chain crosses the membrane as a helical span at residues 85-105; it reads YVLAISIISTLYTAWQTFAHF. Topologically, residues 106-120 are cytoplasmic; that stretch reads SKREFFDRRTSTLVD. A helical transmembrane segment spans residues 121 to 141; it reads FSGDQIVAYLLISAASSAIPL. The Extracellular portion of the chain corresponds to 142–156; it reads TNRFREGQDNIFTDS. The chain crosses the membrane as a helical span at residues 157–177; the sequence is AASAISMAIFAFVALALSALF. At 178-188 the chain is on the cytoplasmic side; it reads SGYKLSTHSFI.

The protein belongs to the Casparian strip membrane proteins (CASP) family. As to quaternary structure, homodimer and heterodimers.

The protein resides in the cell membrane. The sequence is that of CASP-like protein 4B1 from Arabidopsis lyrata subsp. lyrata (Lyre-leaved rock-cress).